Consider the following 198-residue polypeptide: tRNA (pseudouridine(54)-N(1))-methyltransferase (198 aa).

Residues Leu-130, Gly-153, 176-181 (LSPLEL), and Cys-186 each bind S-adenosyl-L-methionine.

The protein belongs to the methyltransferase superfamily. TrmY family. In terms of assembly, homodimer.

Its subcellular location is the cytoplasm. It catalyses the reaction pseudouridine(54) in tRNA + S-adenosyl-L-methionine = N(1)-methylpseudouridine(54) in tRNA + S-adenosyl-L-homocysteine + H(+). Functionally, specifically catalyzes the N1-methylation of pseudouridine at position 54 (Psi54) in tRNAs. This Methanococcus maripaludis (strain C7 / ATCC BAA-1331) protein is tRNA (pseudouridine(54)-N(1))-methyltransferase.